The sequence spans 119 residues: Virulence protein VsdF (119 aa).

Expressed but non-essential protein, involved in the virulence of Salmonellas. This is Virulence protein VsdF (vsdF) from Salmonella dublin.